A 105-amino-acid chain; its full sequence is UPF0473 protein SAG2089 (105 aa).

The protein belongs to the UPF0473 family.

The sequence is that of UPF0473 protein SAG2089 from Streptococcus agalactiae serotype V (strain ATCC BAA-611 / 2603 V/R).